The chain runs to 279 residues: HTH-type transcriptional regulator HdfR (279 aa).

Residues 1–58 (MDTELLKTFLEVSRTRHFGRAAESLYLTQSAVSFRIRQLENQLGVNLFTRHRNNIRLT) form the HTH lysR-type domain. Residues 18–37 (FGRAAESLYLTQSAVSFRIR) constitute a DNA-binding region (H-T-H motif).

The protein belongs to the LysR transcriptional regulatory family.

Its function is as follows. Negatively regulates the transcription of the flagellar master operon flhDC by binding to the upstream region of the operon. The sequence is that of HTH-type transcriptional regulator HdfR from Shigella boydii serotype 18 (strain CDC 3083-94 / BS512).